The sequence spans 214 residues: ER lumen protein-retaining receptor 3 (214 aa).

Residues 1–4 lie on the Lumenal side of the membrane; sequence MNIF. A helical membrane pass occupies residues 5–24; that stretch reads RILGDVSHLLAIIILLLKMW. The Cytoplasmic portion of the chain corresponds to 25-32; that stretch reads KSKSCAGI. A helical membrane pass occupies residues 33–52; the sequence is SGKSQLLFALVFTTRYLDLF. Residues 47–48 form an interaction with the K-D-E-L motif on target proteins region; that stretch reads RY. The Lumenal portion of the chain corresponds to 53–58; that stretch reads TVFISP. Residues 59-79 traverse the membrane as a helical segment; that stretch reads YNTVMKIIFLACAYVTVYLIY. Topologically, residues 80–92 are cytoplasmic; the sequence is GKLRKSYDSENDT. A helical transmembrane segment spans residues 93-110; it reads FRLEFLLVPVIGLSFLEN. The Lumenal segment spans residues 111-116; that stretch reads YEFTPL. Residues 117–135 traverse the membrane as a helical segment; the sequence is EILWTFSIYLESVAILPQL. Topologically, residues 136–149 are cytoplasmic; the sequence is FMISKTGEAESITT. A helical membrane pass occupies residues 150–168; the sequence is HYLFFLGLYRVLYLANWIW. The segment at 159–169 is interaction with the K-D-E-L motif on target proteins; that stretch reads RVLYLANWIWR. The Lumenal segment spans residues 169–178; the sequence is RYHTEKFYDQ. The chain crosses the membrane as a helical span at residues 179–199; the sequence is IAVVSGVVQTIFYFDFFYLYV. Residues 200 to 214 are Cytoplasmic-facing; that stretch reads TKVLKGKKLSLPMPV. Residues 204–207 form an important for recycling of cargo proteins with the sequence motif K-D-E-L from the Golgi to the endoplasmic reticulum region; sequence KGKK.

The protein belongs to the ERD2 family.

The protein localises to the endoplasmic reticulum membrane. Its subcellular location is the golgi apparatus membrane. The protein resides in the cytoplasmic vesicle. It localises to the COPI-coated vesicle membrane. Its function is as follows. Receptor for the C-terminal sequence motif K-D-E-L that is present on endoplasmic reticulum resident proteins and that mediates their recycling from the Golgi back to the endoplasmic reticulum. This chain is ER lumen protein-retaining receptor 3 (kdelr3), found in Xenopus laevis (African clawed frog).